The chain runs to 529 residues: AT hook-containing protein attf-4 (529 aa).

Disordered stretches follow at residues 1 to 39 (MLQPPTLTPNANGEEFRGSVSTDRSSASPSNIDEIMEDD), 131 to 158 (QVVHKDQQNGSSFLPSANKTSENPKPIE), 173 to 200 (GGGGGKIHTERLSEPARKQSRKVGFPPP), and 233 to 255 (VSANTSTASPGPSSEGSGDDHLE). Polar residues-rich tracts occupy residues 19-31 (SVSTDRSSASPSN) and 138-153 (QNGSSFLPSANKTSEN). A compositionally biased stretch (basic and acidic residues) spans 179-189 (IHTERLSEPAR). Residues 233-248 (VSANTSTASPGPSSEG) are compositionally biased toward low complexity. The segment at residues 307–319 (GRGRGRPKLIGDE) is a DNA-binding region (a.T hook). A disordered region spans residues 436–476 (LEGGSPPASSSSTATTSTATKTVKQESKNGHQNEENLNVKQ). Positions 443-455 (ASSSSTATTSTAT) are enriched in low complexity. The span at 458-469 (VKQESKNGHQNE) shows a compositional bias: basic and acidic residues.

In Caenorhabditis elegans, this protein is AT hook-containing protein attf-4.